A 184-amino-acid polypeptide reads, in one-letter code: Transmembrane protein 220 (184 aa).

5 helical membrane passes run 30 to 50 (LWRICNFIMFGFFSLAAYVQI), 54 to 74 (DAEMWIVIYMIPAVLILFVSI), 82 to 102 (VIWKLLADLHSAVCAVGAIYL), 121 to 137 (RELSGLLIISGWLLLCR), and 149 to 169 (LIIAISVSTAPFFIWIYIYID).

It is found in the membrane. The polypeptide is Transmembrane protein 220 (tmem220) (Xenopus laevis (African clawed frog)).